The sequence spans 383 residues: Anhydro-N-acetylmuramic acid kinase (383 aa).

Position 9-16 (9-16) interacts with ATP; that stretch reads GTSVDSID.

Belongs to the anhydro-N-acetylmuramic acid kinase family.

It carries out the reaction 1,6-anhydro-N-acetyl-beta-muramate + ATP + H2O = N-acetyl-D-muramate 6-phosphate + ADP + H(+). It participates in amino-sugar metabolism; 1,6-anhydro-N-acetylmuramate degradation. Its pathway is cell wall biogenesis; peptidoglycan recycling. In terms of biological role, catalyzes the specific phosphorylation of 1,6-anhydro-N-acetylmuramic acid (anhMurNAc) with the simultaneous cleavage of the 1,6-anhydro ring, generating MurNAc-6-P. Is required for the utilization of anhMurNAc either imported from the medium or derived from its own cell wall murein, and thus plays a role in cell wall recycling. This chain is Anhydro-N-acetylmuramic acid kinase, found in Crocosphaera subtropica (strain ATCC 51142 / BH68) (Cyanothece sp. (strain ATCC 51142)).